A 151-amino-acid chain; its full sequence is UPF0178 protein YaiI (151 aa).

This sequence belongs to the UPF0178 family.

This is UPF0178 protein YaiI from Salmonella paratyphi C (strain RKS4594).